The chain runs to 263 residues: Putative methyltransferase DDB_G0268948 (263 aa).

Belongs to the methyltransferase superfamily.

This chain is Putative methyltransferase DDB_G0268948, found in Dictyostelium discoideum (Social amoeba).